A 198-amino-acid chain; its full sequence is MDRRVCGVDEAGRGPLAGGVYAAAVILDPARPVEGLADSKKLSAARREALAPLIRERALAWCVAWATVEEIDRLNILHATMLAMCRAVDGLAVPPDAIEVDGNRVPPFVLDIPARAIVKGDATVAAISAASILAKTARDAECLELDARYPGYGFAAHKGYPTAAHVAAIERLGVLPVHRRSFGPVKRCLALGQQALEF.

The RNase H type-2 domain maps to 3–194 (RRVCGVDEAG…VKRCLALGQQ (192 aa)). A divalent metal cation-binding residues include Asp-9, Glu-10, and Asp-101.

The protein belongs to the RNase HII family. Mn(2+) is required as a cofactor. It depends on Mg(2+) as a cofactor.

Its subcellular location is the cytoplasm. The catalysed reaction is Endonucleolytic cleavage to 5'-phosphomonoester.. Its function is as follows. Endonuclease that specifically degrades the RNA of RNA-DNA hybrids. This Laribacter hongkongensis (strain HLHK9) protein is Ribonuclease HII.